The primary structure comprises 141 residues: Large ribosomal subunit protein uL11 (141 aa).

The protein belongs to the universal ribosomal protein uL11 family. Part of the ribosomal stalk of the 50S ribosomal subunit. Interacts with L10 and the large rRNA to form the base of the stalk. L10 forms an elongated spine to which L12 dimers bind in a sequential fashion forming a multimeric L10(L12)X complex. In terms of processing, one or more lysine residues are methylated.

Forms part of the ribosomal stalk which helps the ribosome interact with GTP-bound translation factors. This Roseobacter denitrificans (strain ATCC 33942 / OCh 114) (Erythrobacter sp. (strain OCh 114)) protein is Large ribosomal subunit protein uL11.